The chain runs to 306 residues: Homoserine kinase (306 aa).

84-94 (PAGLGLGSSGA) serves as a coordination point for ATP.

Belongs to the GHMP kinase family. Homoserine kinase subfamily.

The protein resides in the cytoplasm. The catalysed reaction is L-homoserine + ATP = O-phospho-L-homoserine + ADP + H(+). It functions in the pathway amino-acid biosynthesis; L-threonine biosynthesis; L-threonine from L-aspartate: step 4/5. Functionally, catalyzes the ATP-dependent phosphorylation of L-homoserine to L-homoserine phosphate. The protein is Homoserine kinase of Sulfurisphaera tokodaii (strain DSM 16993 / JCM 10545 / NBRC 100140 / 7) (Sulfolobus tokodaii).